The sequence spans 337 residues: Holliday junction branch migration complex subunit RuvB (337 aa).

Positions 1-22 (MEDERITSAEVQSPDEENEELS) are disordered. Residues 1-184 (MEDERITSAE…FGIVEHMNYY (184 aa)) form a large ATPase domain (RuvB-L) region. ATP is bound by residues Leu-23, Arg-24, Gly-65, Lys-68, Thr-69, Thr-70, 131–133 (EDF), Arg-174, Tyr-184, and Arg-221. Thr-69 is a binding site for Mg(2+). The interval 185-255 (NEADLANIVR…LVSQSLKLLQ (71 aa)) is small ATPAse domain (RuvB-S). The interval 258-337 (NRGLDRTDKK…LGLIDQYMNK (80 aa)) is head domain (RuvB-H). DNA is bound by residues Arg-313 and Arg-318.

It belongs to the RuvB family. In terms of assembly, homohexamer. Forms an RuvA(8)-RuvB(12)-Holliday junction (HJ) complex. HJ DNA is sandwiched between 2 RuvA tetramers; dsDNA enters through RuvA and exits via RuvB. An RuvB hexamer assembles on each DNA strand where it exits the tetramer. Each RuvB hexamer is contacted by two RuvA subunits (via domain III) on 2 adjacent RuvB subunits; this complex drives branch migration. In the full resolvosome a probable DNA-RuvA(4)-RuvB(12)-RuvC(2) complex forms which resolves the HJ.

Its subcellular location is the cytoplasm. It catalyses the reaction ATP + H2O = ADP + phosphate + H(+). Functionally, the RuvA-RuvB-RuvC complex processes Holliday junction (HJ) DNA during genetic recombination and DNA repair, while the RuvA-RuvB complex plays an important role in the rescue of blocked DNA replication forks via replication fork reversal (RFR). RuvA specifically binds to HJ cruciform DNA, conferring on it an open structure. The RuvB hexamer acts as an ATP-dependent pump, pulling dsDNA into and through the RuvAB complex. RuvB forms 2 homohexamers on either side of HJ DNA bound by 1 or 2 RuvA tetramers; 4 subunits per hexamer contact DNA at a time. Coordinated motions by a converter formed by DNA-disengaged RuvB subunits stimulates ATP hydrolysis and nucleotide exchange. Immobilization of the converter enables RuvB to convert the ATP-contained energy into a lever motion, pulling 2 nucleotides of DNA out of the RuvA tetramer per ATP hydrolyzed, thus driving DNA branch migration. The RuvB motors rotate together with the DNA substrate, which together with the progressing nucleotide cycle form the mechanistic basis for DNA recombination by continuous HJ branch migration. Branch migration allows RuvC to scan DNA until it finds its consensus sequence, where it cleaves and resolves cruciform DNA. This chain is Holliday junction branch migration complex subunit RuvB, found in Pediococcus pentosaceus (strain ATCC 25745 / CCUG 21536 / LMG 10740 / 183-1w).